The primary structure comprises 261 residues: MRFLILFLALSLGGIDAAPPVQSRIVGGFNCEKNSQPWQVAVYRFTKYQCGGILLNANWVLTAAHCHNDKYQVWLGKNNFLEDEPSAQHRLVSKAIPHPDFNMSLLNEHTPQPEDDYSNDLMLLRLKKPADITDVVKPIDLPTEEPKLGSTCLASGWGSITPVKYEYPDELQCVNLKLLPNEDCAKAHIEKVTDDMLCAGDMDGGKDTCAGDSGGPLICDGVLQGITSWGPSPCGKPNVPGIYTRVLNFNTWIRETMAEND.

An N-terminal signal peptide occupies residues 1–18 (MRFLILFLALSLGGIDAA). A propeptide spans 19–24 (PPVQSR) (activation peptide). One can recognise a Peptidase S1 domain in the interval 25 to 258 (IVGGFNCEKN…FNTWIRETMA (234 aa)). 5 cysteine pairs are disulfide-bonded: Cys31–Cys173, Cys50–Cys66, Cys152–Cys219, Cys184–Cys198, and Cys209–Cys234. Residue His65 is the Charge relay system of the active site. N-linked (GlcNAc...) asparagine glycosylation is present at Asn102. Catalysis depends on Asp120, which acts as the Charge relay system. Catalysis depends on Ser213, which acts as the Charge relay system.

This sequence belongs to the peptidase S1 family. Kallikrein subfamily.

It carries out the reaction Preferential cleavage of Arg-|-Xaa bonds in small molecule substrates. Highly selective action to release kallidin (lysyl-bradykinin) from kininogen involves hydrolysis of Met-|-Xaa or Leu-|-Xaa.. Functionally, glandular kallikreins cleave Met-Lys and Arg-Ser bonds in kininogen to release Lys-bradykinin. This chain is Kallikrein-1 (Klk1), found in Mus musculus (Mouse).